The primary structure comprises 201 residues: MKRLNREFYTRDTIEVAKDLLGKIIVVENETKLLGKIVEVEAYGGISDKAAHSYGNRKTERTKIMYEEGGYVYVFQIYGMYNCLNIVSSKKDVPEAVLIRAVEPIENIDDFSKNRYGKDFNELTKYQQKNITNGPGKLCMAMNITKKFNGLDLCKDNIYIVDNKEEFEIVASKRIGIDYAEEAKDYLWRFYIKDSKYVSKK.

The protein belongs to the DNA glycosylase MPG family.

This chain is Putative 3-methyladenine DNA glycosylase, found in Clostridium novyi (strain NT).